The following is a 623-amino-acid chain: Pentatricopeptide repeat-containing protein At5g15340, mitochondrial (623 aa).

The transit peptide at 1 to 16 (MKCLSYQKVRLLLRHC) directs the protein to the mitochondrion. 11 PPR repeats span residues 42 to 72 (RSYL…IPLS), 75 to 109 (DNVD…RVEI), 110 to 144 (DDVS…GVLT), 145 to 179 (SVKV…SVVS), 180 to 206 (WTVV…MPER), 207 to 237 (NAVA…MVFR), 243 to 277 (NFVT…EMMM), 285 to 319 (DVMV…NVVT), 320 to 346 (WNAL…MIRE), 350 to 384 (DDLT…GLEP), and 385 to 419 (KVDH…PNEV). The type E motif stretch occupies residues 420 to 495 (VLGSLLGSCS…IPGLSSIYVN (76 aa)). The type E(+) motif stretch occupies residues 496–526 (DSVHRFSSGDRSHPRTKEIYLKLNEVIERIR). The interval 527-623 (SAGYVPDVSG…GGSCSCSDYW (97 aa)) is type DYW motif.

It belongs to the PPR family. PCMP-H subfamily.

Its subcellular location is the mitochondrion. In Arabidopsis thaliana (Mouse-ear cress), this protein is Pentatricopeptide repeat-containing protein At5g15340, mitochondrial (PCMP-H91).